The following is a 406-amino-acid chain: Succinylornithine transaminase (406 aa).

Residue K252 is modified to N6-(pyridoxal phosphate)lysine.

The protein belongs to the class-III pyridoxal-phosphate-dependent aminotransferase family. AstC subfamily. It depends on pyridoxal 5'-phosphate as a cofactor.

The enzyme catalyses N(2)-succinyl-L-ornithine + 2-oxoglutarate = N-succinyl-L-glutamate 5-semialdehyde + L-glutamate. It participates in amino-acid degradation; L-arginine degradation via AST pathway; L-glutamate and succinate from L-arginine: step 3/5. Functionally, catalyzes the transamination of N(2)-succinylornithine and alpha-ketoglutarate into N(2)-succinylglutamate semialdehyde and glutamate. Can also act as an acetylornithine aminotransferase. This Shigella boydii serotype 18 (strain CDC 3083-94 / BS512) protein is Succinylornithine transaminase.